Here is a 711-residue protein sequence, read N- to C-terminus: Consortin (711 aa).

5 disordered regions span residues 1–157 (MDDS…NDPP), 294–332 (AVGTEAAAKEPEIETCPSTDPSGDRHEEEPQESSPGCHQ), 370–389 (ETAGSRSGPAAASNACKDSS), 394–432 (PPTEDHCGVARDPKVAPPSESVAEQKLSTGDDGALPGLI), and 457–496 (PRDQPHSSEVAEPRQPDVTASDGKSAQSQAGLETGPESAL). Residues 1–650 (MDDSDPPTYS…LEQDEVGGGS (650 aa)) lie on the Cytoplasmic side of the membrane. A compositionally biased stretch (polar residues) spans 63 to 77 (VSEQDSLNNNESFPS). The span at 109 to 120 (PAKRSPRAKKSS) shows a compositional bias: basic residues. Basic and acidic residues-rich tracts occupy residues 396 to 407 (TEDHCGVARDPK) and 457 to 471 (PRDQPHSSEVAEPRQ). A compositionally biased stretch (polar residues) spans 478 to 487 (DGKSAQSQAG). The helical transmembrane segment at 651–671 (CILLILLCIATVFLSVGGTAL) threads the bilayer. The Extracellular portion of the chain corresponds to 672–711 (YCTLGNIESPVCTDFADNVDFYYTKLLQGVAGLKHWVYLS).

Belongs to the CNST family. As to quaternary structure, interacts with connexins GJA1/CX43, GJB1/CX32, GJB2/CX26, GJB3/CX31, GJB6/CX30 and GJC1/CX45. Also interacts with GGA1 and GGA2. Does not interact with PANX1.

Its subcellular location is the cell membrane. The protein localises to the golgi apparatus. The protein resides in the trans-Golgi network membrane. It localises to the cytoplasmic vesicle. It is found in the secretory vesicle. Required for targeting of connexins to the plasma membrane. The polypeptide is Consortin (Cnst) (Mus musculus (Mouse)).